We begin with the raw amino-acid sequence, 162 residues long: MLKRYMLLAVATVFFAFQVLTSTATAAELDDATRTVALNEGSTVTLSTQQAKEGQRLFNFACANCHIGGDTKTNPSINLSSASLAGANPRRDNVEGLVDYMNNPTTYDGFDTISEVHPSTQSTDVFPLMRNLSDEDLFDIAGHILIQPSVIGDQWGGGKANR.

Positions 1 to 26 (MLKRYMLLAVATVFFAFQVLTSTATA) are cleaved as a signal peptide. 4 residues coordinate heme c: Cys62, Cys65, His66, and His117.

Belongs to the cytochrome c family. PsbV subfamily. In terms of assembly, PSII is composed of 1 copy each of membrane proteins PsbA, PsbB, PsbC, PsbD, PsbE, PsbF, PsbH, PsbI, PsbJ, PsbK, PsbL, PsbM, PsbT, PsbX, PsbY, PsbZ, Psb30/Ycf12, peripheral proteins PsbO, CyanoQ (PsbQ), PsbU, PsbV and a large number of cofactors. It forms dimeric complexes. It depends on heme c as a cofactor.

It localises to the cellular thylakoid membrane. Its function is as follows. One of the extrinsic, lumenal subunits of photosystem II (PSII). PSII is a light-driven water plastoquinone oxidoreductase, using light energy to abstract electrons from H(2)O, generating a proton gradient subsequently used for ATP formation. The extrinsic proteins stabilize the structure of photosystem II oxygen-evolving complex (OEC), the ion environment of oxygen evolution and protect the OEC against heat-induced inactivation. Low-potential cytochrome c that plays a role in the OEC of PSII. This is Photosystem II extrinsic protein V from Acaryochloris marina (strain MBIC 11017).